Reading from the N-terminus, the 197-residue chain is Protein shisa-4 (197 aa).

The N-terminal stretch at methionine 1–alanine 27 is a signal peptide. Residues serine 28 to alanine 87 are Extracellular-facing. Residues glycine 88–leucine 108 form a helical membrane-spanning segment. The Cytoplasmic segment spans residues cysteine 109–alanine 197.

The protein belongs to the shisa family.

The protein resides in the membrane. The chain is Protein shisa-4 (Shisa4) from Mus musculus (Mouse).